We begin with the raw amino-acid sequence, 875 residues long: Alanine--tRNA ligase (875 aa).

The Zn(2+) site is built by H562, H566, C665, and H669.

This sequence belongs to the class-II aminoacyl-tRNA synthetase family. Zn(2+) is required as a cofactor.

Its subcellular location is the cytoplasm. It carries out the reaction tRNA(Ala) + L-alanine + ATP = L-alanyl-tRNA(Ala) + AMP + diphosphate. Functionally, catalyzes the attachment of alanine to tRNA(Ala) in a two-step reaction: alanine is first activated by ATP to form Ala-AMP and then transferred to the acceptor end of tRNA(Ala). Also edits incorrectly charged Ser-tRNA(Ala) and Gly-tRNA(Ala) via its editing domain. This chain is Alanine--tRNA ligase, found in Saccharophagus degradans (strain 2-40 / ATCC 43961 / DSM 17024).